The primary structure comprises 219 residues: 2-hydroxy-3-keto-5-methylthiopentenyl-1-phosphate phosphatase (219 aa).

It belongs to the HAD-like hydrolase superfamily. MtnX family.

It carries out the reaction 2-hydroxy-5-methylsulfanyl-3-oxopent-1-enyl phosphate + H2O = 1,2-dihydroxy-5-(methylsulfanyl)pent-1-en-3-one + phosphate. It functions in the pathway amino-acid biosynthesis; L-methionine biosynthesis via salvage pathway; L-methionine from S-methyl-5-thio-alpha-D-ribose 1-phosphate: step 4/6. In terms of biological role, dephosphorylates 2-hydroxy-3-keto-5-methylthiopentenyl-1-phosphate (HK-MTPenyl-1-P) yielding 1,2-dihydroxy-3-keto-5-methylthiopentene (DHK-MTPene). This Bacillus cereus (strain AH187) protein is 2-hydroxy-3-keto-5-methylthiopentenyl-1-phosphate phosphatase.